The primary structure comprises 165 residues: Bark lectin isoform 1 (165 aa).

2 N-linked (GlcNAc...) asparagine glycosylation sites follow: asparagine 27 and asparagine 57. Disulfide bonds link cysteine 33–cysteine 80 and cysteine 126–cysteine 133.

Belongs to the protease inhibitor I3 (leguminous Kunitz-type inhibitor) family. Dimer.

Its function is as follows. Glucose and N-acetylglucosamine binding lectin. Has hemagglutinating activity against human and rabbit erythrocytes which does not require divalent cations. Inhibits factor Xa and, to a lesser extent, trypsin. Does not inhibit neutrophil elastase, human plasma kallikrein, papain, human plasmin, porcine pancreatic kallikrein and bovin chymotrypsin. Has insecticidal activity against the termite species N.corniger. Induces apoptosis in prostrate cancer cell lines DU145 and PC3. The chain is Bark lectin isoform 1 from Crateva tapia (Garlic-pear tree).